Consider the following 340-residue polypeptide: Glyceraldehyde-3-phosphate dehydrogenase 2 (340 aa).

NADP(+) contacts are provided by residues 12 to 13 (RI), R78, and T120. D-glyceraldehyde 3-phosphate-binding positions include 151-153 (SCT) and T182. Residue C152 is the Nucleophile of the active site. Residue N183 coordinates NADP(+). D-glyceraldehyde 3-phosphate is bound by residues R197, 210 to 211 (TG), and R233. Residue N315 coordinates NADP(+).

It belongs to the glyceraldehyde-3-phosphate dehydrogenase family. In terms of assembly, homotetramer. Interacts with BrxC. In response to oxidative stress, the active site Cys likely reacts with bacillithiol (BSH) to form mixed disulfides to protect the Cys residue against overoxidation. S-bacillithiolation presumably leads to loss of catalytic activity. Debacillithiolation by monothiol bacilliredoxin BrxC restores the activity.

The protein localises to the cytoplasm. The enzyme catalyses D-glyceraldehyde 3-phosphate + phosphate + NADP(+) = (2R)-3-phospho-glyceroyl phosphate + NADPH + H(+). It carries out the reaction D-glyceraldehyde 3-phosphate + phosphate + NAD(+) = (2R)-3-phospho-glyceroyl phosphate + NADH + H(+). It participates in carbohydrate biosynthesis; gluconeogenesis. Its function is as follows. Involved in the gluconeogenesis. Catalyzes the oxidative phosphorylation of glyceraldehyde 3-phosphate (G3P) to 1,3-bisphosphoglycerate (BPG) using the cofactor NADP. The first reaction step involves the formation of a hemiacetal intermediate between G3P and a cysteine residue, and this hemiacetal intermediate is then oxidized to a thioester, with concomitant reduction of NADP to NADPH. The reduced NADPH is then exchanged with the second NADP, and the thioester is attacked by a nucleophilic inorganic phosphate to produce BPG. This is Glyceraldehyde-3-phosphate dehydrogenase 2 from Bacillus subtilis (strain 168).